A 457-amino-acid polypeptide reads, in one-letter code: MTKKVYVKTFGCQMNEYDSDKMVDVLNAAEGLEKTDTPEDADIILFNTCSVREKAQEKVFSDLGRVRELKEAKPGLLIGVGGCVASQEGASIVSRAPYVDLVFGPQTLHRLPQMIDARRASGRAQVDITFPEIEKFDHLPPARVEGPSAFVSIMEGCSKYCSYCVVPYTRGDEVSRPLDDVLTEVAGLADQGVREVTLLGQNVNAYRGALTAGSTDIADFATLIEYVADIPGIERIRYTTSHPKEFTQRLIDTYAKVPKLVSHLHLPVQHGSDRILMAMKRGYTVLEYKSVIRKLRAIRPDLSLSTDMIVGFPGETEDDFDKMMALVHEMGYDTSFSFIYSPRPGTPAANLADDTPREVKLKRLQHLQATIEENVARISQSMVGKVERILVEGPSRKDPNELAGRTENNRVVNFPAPLASHPRLIGQMIDVKINHAYPHSLRGELVLVSDDASTATH.

The MTTase N-terminal domain maps to 3 to 120 (KKVYVKTFGC…LPQMIDARRA (118 aa)). Residues C12, C49, C83, C157, C161, and C164 each contribute to the [4Fe-4S] cluster site. The 235-residue stretch at 143-377 (RVEGPSAFVS…QATIEENVAR (235 aa)) folds into the Radical SAM core domain. A TRAM domain is found at 380 to 447 (QSMVGKVERI…PHSLRGELVL (68 aa)).

This sequence belongs to the methylthiotransferase family. MiaB subfamily. In terms of assembly, monomer. [4Fe-4S] cluster serves as cofactor.

It localises to the cytoplasm. It catalyses the reaction N(6)-dimethylallyladenosine(37) in tRNA + (sulfur carrier)-SH + AH2 + 2 S-adenosyl-L-methionine = 2-methylsulfanyl-N(6)-dimethylallyladenosine(37) in tRNA + (sulfur carrier)-H + 5'-deoxyadenosine + L-methionine + A + S-adenosyl-L-homocysteine + 2 H(+). In terms of biological role, catalyzes the methylthiolation of N6-(dimethylallyl)adenosine (i(6)A), leading to the formation of 2-methylthio-N6-(dimethylallyl)adenosine (ms(2)i(6)A) at position 37 in tRNAs that read codons beginning with uridine. This chain is tRNA-2-methylthio-N(6)-dimethylallyladenosine synthase, found in Burkholderia cenocepacia (strain HI2424).